A 60-amino-acid chain; its full sequence is Metallothionein A (60 aa).

The interval 1-28 is beta; it reads MDPCECSKSGTCNCGGSCTCTNCSCKSC. A divalent metal cation-binding residues include Cys-4, Cys-6, Cys-12, Cys-14, Cys-18, Cys-20, Cys-23, Cys-25, Cys-28, Cys-32, Cys-33, Cys-35, Cys-36, Cys-40, Cys-43, Cys-47, Cys-49, Cys-54, Cys-58, and Cys-59. The interval 29-60 is alpha; sequence KKSCCPCCPSGCTKCASGCVCKGKTCDTSCCQ.

It belongs to the metallothionein superfamily. Type 1 family.

Functionally, metallothioneins have a high content of cysteine residues that bind various heavy metals. This Chionodraco rastrospinosus (Ocellated icefish) protein is Metallothionein A (mta).